A 160-amino-acid chain; its full sequence is Troponin C, isoform 2 (160 aa).

EF-hand domains are found at residues 15–50 (DQIE…MGQA), 51–86 (FEER…FVVN), 92–127 (GLEE…LDDN), and 128–160 (VSEE…MSGE). Positions 64, 66, 68, 70, and 75 each coordinate Ca(2+). Ca(2+) is bound by residues D141, D143, S145, T147, and E152.

Belongs to the troponin C family. In terms of tissue distribution, pharyngeal muscle.

The chain is Troponin C, isoform 2 (tnc-2) from Caenorhabditis elegans.